Here is a 110-residue protein sequence, read N- to C-terminus: Cytochrome subunit of sulfide dehydrogenase (110 aa).

Positions 1–16 (MLAAAPLLLASGNGFA) are cleaved as a signal peptide. Residues Cys41, Cys44, His45, and Met83 each coordinate heme c.

Dimer of one cytochrome and one flavoprotein. In terms of processing, binds 1 heme c group covalently per subunit.

Its subcellular location is the periplasm. Monoheme cytochrome that function as the electron transport subunit of sulfide dehydrogenase. The polypeptide is Cytochrome subunit of sulfide dehydrogenase (fccA) (Chlorobaculum tepidum (strain ATCC 49652 / DSM 12025 / NBRC 103806 / TLS) (Chlorobium tepidum)).